The chain runs to 566 residues: Pentatricopeptide repeat-containing protein At4g11690 (566 aa).

13 PPR repeats span residues 93-127 (KFRLYEVIINSYVQSQSLNLSISYFNEMVDNGFVP), 128-158 (GSNCFNYLLTFVVGSSSFNQWWSFFNENKSK), 162-196 (DVYSFGILIKGCCEAGEIEKSFDLLIELTEFGFSP), 197-231 (NVVIYTTLIDGCCKKGEIEKAKDLFFEMGKLGLVA), 232-266 (NERTYTVLINGLFKNGVKKQGFEMYEKMQEDGVFP), 267-301 (NLYTYNCVMNQLCKDGRTKDAFQVFDEMRERGVSC), 302-336 (NIVTYNTLIGGLCREMKLNEANKVVDQMKSDGINP), 337-371 (NLITYNTLIDGFCGVGKLGKALSLCRDLKSRGLSP), 372-406 (SLVTYNILVSGFCRKGDTSGAAKMVKEMEERGIKP), 407-441 (SKVTYTILIDTFARSDNMEKAIQLRLSMEELGLVP), 442-476 (DVHTYSVLIHGFCIKGQMNEASRLFKSMVEKNCEP), 477-511 (NEVIYNTMILGYCKEGSSYRALKLLKEMEEKELAP), and 512-546 (NVASYRYMIEVLCKERKSKEAERLVEKMIDSGIDP).

It belongs to the PPR family. P subfamily.

This is Pentatricopeptide repeat-containing protein At4g11690 from Arabidopsis thaliana (Mouse-ear cress).